The chain runs to 90 residues: ATP synthase subunit c (90 aa).

Helical transmembrane passes span 17 to 37 and 70 to 90; these read PLAY…AGVV and LAIV…IIFV.

This sequence belongs to the ATPase C chain family. As to quaternary structure, F-type ATPases have 2 components, F(1) - the catalytic core - and F(0) - the membrane proton channel. F(1) has five subunits: alpha(3), beta(3), gamma(1), delta(1), epsilon(1). F(0) has three main subunits: a(1), b(2) and c(10-14). The alpha and beta chains form an alternating ring which encloses part of the gamma chain. F(1) is attached to F(0) by a central stalk formed by the gamma and epsilon chains, while a peripheral stalk is formed by the delta and b chains.

It localises to the cell membrane. In terms of biological role, f(1)F(0) ATP synthase produces ATP from ADP in the presence of a proton or sodium gradient. F-type ATPases consist of two structural domains, F(1) containing the extramembraneous catalytic core and F(0) containing the membrane proton channel, linked together by a central stalk and a peripheral stalk. During catalysis, ATP synthesis in the catalytic domain of F(1) is coupled via a rotary mechanism of the central stalk subunits to proton translocation. Key component of the F(0) channel; it plays a direct role in translocation across the membrane. A homomeric c-ring of between 10-14 subunits forms the central stalk rotor element with the F(1) delta and epsilon subunits. The sequence is that of ATP synthase subunit c from Metamycoplasma arthritidis (strain 158L3-1) (Mycoplasma arthritidis).